We begin with the raw amino-acid sequence, 41 residues long: Urotensin-1 (41 aa).

Position 41 is a valine amide (Val-41).

It belongs to the sauvagine/corticotropin-releasing factor/urotensin I family.

The protein resides in the secreted. Functionally, urotensin is found in the teleost caudal neurosecretory system. It has a suggested role in osmoregulation and as a corticotropin-releasing factor. This Catostomus commersonii (White sucker) protein is Urotensin-1.